Here is a 163-residue protein sequence, read N- to C-terminus: MGKRNLDETMNESAVSEIAEDVAALTTEKDEYQALCELVNPIAQPLANRKLAKKVYKLIKKAAAGEKTLREGIKDVQKELRKNEKGICILAGNVSPIDVYSHIPAICEEKEIPYVYIPSREQLGLAVGHRRPSILIFVKPSADFQELYDEVAETLHHLTVDAA.

Belongs to the eukaryotic ribosomal protein eL8 family. In terms of assembly, component of the small nucleolar ribonucleoprotein particle containing H/ACA-type snoRNAs (H/ACA snoRNPs).

The protein resides in the nucleus. It localises to the nucleolus. Its function is as follows. Required for ribosome biogenesis. Part of a complex which catalyzes pseudouridylation of rRNA. This involves the isomerization of uridine such that the ribose is subsequently attached to C5, instead of the normal N1. Pseudouridine ('psi') residues may serve to stabilize the conformation of rRNAs. The chain is Putative H/ACA ribonucleoprotein complex subunit 2-like protein from Caenorhabditis briggsae.